A 122-amino-acid polypeptide reads, in one-letter code: Large ribosomal subunit protein uL14 (122 aa).

It belongs to the universal ribosomal protein uL14 family. In terms of assembly, part of the 50S ribosomal subunit. Forms a cluster with proteins L3 and L19. In the 70S ribosome, L14 and L19 interact and together make contacts with the 16S rRNA in bridges B5 and B8.

In terms of biological role, binds to 23S rRNA. Forms part of two intersubunit bridges in the 70S ribosome. The sequence is that of Large ribosomal subunit protein uL14 from Moorella thermoacetica (strain ATCC 39073 / JCM 9320).